Here is a 241-residue protein sequence, read N- to C-terminus: Ribonuclease HII (241 aa).

The region spanning 27-227 (GPVAGVDEAG…REARSLRLED (201 aa)) is the RNase H type-2 domain. Asp-33, Glu-34, and Asp-128 together coordinate a divalent metal cation.

It belongs to the RNase HII family. It depends on Mn(2+) as a cofactor. Mg(2+) is required as a cofactor.

It is found in the cytoplasm. It catalyses the reaction Endonucleolytic cleavage to 5'-phosphomonoester.. Endonuclease that specifically degrades the RNA of RNA-DNA hybrids. This is Ribonuclease HII from Frankia alni (strain DSM 45986 / CECT 9034 / ACN14a).